Reading from the N-terminus, the 135-residue chain is Small ribosomal subunit protein bS6 (135 aa).

A disordered region spans residues 98-135 (EASPMAKAKDERDARRAAISERSSEADEVEENAEESAE). Residues 104–122 (KAKDERDARRAAISERSSE) show a composition bias toward basic and acidic residues. A compositionally biased stretch (acidic residues) spans 123 to 135 (ADEVEENAEESAE).

Belongs to the bacterial ribosomal protein bS6 family.

Binds together with bS18 to 16S ribosomal RNA. This chain is Small ribosomal subunit protein bS6, found in Shewanella amazonensis (strain ATCC BAA-1098 / SB2B).